The sequence spans 211 residues: Thiamine-phosphate synthase (211 aa).

Residues 37–41 (QLRIK) and N69 each bind 4-amino-2-methyl-5-(diphosphooxymethyl)pyrimidine. D70 and D89 together coordinate Mg(2+). S108 serves as a coordination point for 4-amino-2-methyl-5-(diphosphooxymethyl)pyrimidine. 134–136 (TQT) contributes to the 2-[(2R,5Z)-2-carboxy-4-methylthiazol-5(2H)-ylidene]ethyl phosphate binding site. K137 is a binding site for 4-amino-2-methyl-5-(diphosphooxymethyl)pyrimidine. 2-[(2R,5Z)-2-carboxy-4-methylthiazol-5(2H)-ylidene]ethyl phosphate is bound by residues G166 and 186-187 (VS).

The protein belongs to the thiamine-phosphate synthase family. Mg(2+) serves as cofactor.

The enzyme catalyses 2-[(2R,5Z)-2-carboxy-4-methylthiazol-5(2H)-ylidene]ethyl phosphate + 4-amino-2-methyl-5-(diphosphooxymethyl)pyrimidine + 2 H(+) = thiamine phosphate + CO2 + diphosphate. It carries out the reaction 2-(2-carboxy-4-methylthiazol-5-yl)ethyl phosphate + 4-amino-2-methyl-5-(diphosphooxymethyl)pyrimidine + 2 H(+) = thiamine phosphate + CO2 + diphosphate. The catalysed reaction is 4-methyl-5-(2-phosphooxyethyl)-thiazole + 4-amino-2-methyl-5-(diphosphooxymethyl)pyrimidine + H(+) = thiamine phosphate + diphosphate. It participates in cofactor biosynthesis; thiamine diphosphate biosynthesis; thiamine phosphate from 4-amino-2-methyl-5-diphosphomethylpyrimidine and 4-methyl-5-(2-phosphoethyl)-thiazole: step 1/1. Functionally, condenses 4-methyl-5-(beta-hydroxyethyl)thiazole monophosphate (THZ-P) and 2-methyl-4-amino-5-hydroxymethyl pyrimidine pyrophosphate (HMP-PP) to form thiamine monophosphate (TMP). This chain is Thiamine-phosphate synthase, found in Enterobacter sp. (strain 638).